A 241-amino-acid polypeptide reads, in one-letter code: MTFYFYFVINMEKVAIYIIGDIVLAENTGKALKKWRNLFNIQQIELAKYLNVSPSVISDYEVGRRKNPGVNIIKKYVLALIEIDKEKGGQTIKALKRILDKSPSMKAILSIKEYENPITLNEFVNIIDGEIAVGDNSDTPIYGHTVVDSIKAILEMTGDDFYHLYGWTTERALIFTNVSTGRSPMVAVRVSIMKPRVVVLQGINKDKIDSLALKLAEIDNIPLITTHLDTKELIKRLNEIK.

The 55-residue stretch at 32-86 (LKKWRNLFNIQQIELAKYLNVSPSVISDYEVGRRKNPGVNIIKKYVLALIEIDKE) folds into the HTH cro/C1-type domain. Residues 43 to 62 (QIELAKYLNVSPSVISDYEV) constitute a DNA-binding region (H-T-H motif).

This is an uncharacterized protein from Methanocaldococcus jannaschii (strain ATCC 43067 / DSM 2661 / JAL-1 / JCM 10045 / NBRC 100440) (Methanococcus jannaschii).